We begin with the raw amino-acid sequence, 100 residues long: Large ribosomal subunit protein uL23 (100 aa).

This sequence belongs to the universal ribosomal protein uL23 family. In terms of assembly, part of the 50S ribosomal subunit. Contacts protein L29, and trigger factor when it is bound to the ribosome.

In terms of biological role, one of the early assembly proteins it binds 23S rRNA. One of the proteins that surrounds the polypeptide exit tunnel on the outside of the ribosome. Forms the main docking site for trigger factor binding to the ribosome. The sequence is that of Large ribosomal subunit protein uL23 from Pseudoalteromonas translucida (strain TAC 125).